The following is a 287-amino-acid chain: Pyridoxal kinase PdxY (287 aa).

Substrate is bound by residues Ser-10 and 45-46 (TQ). ATP-binding positions include Asp-112, Ala-144, Glu-149, Lys-182, and 209 to 212 (RPLV). Asp-224 is a binding site for substrate.

Belongs to the pyridoxine kinase family. PdxY subfamily. Homodimer. Mg(2+) serves as cofactor.

The catalysed reaction is pyridoxal + ATP = pyridoxal 5'-phosphate + ADP + H(+). It participates in cofactor metabolism; pyridoxal 5'-phosphate salvage; pyridoxal 5'-phosphate from pyridoxal: step 1/1. Pyridoxal kinase involved in the salvage pathway of pyridoxal 5'-phosphate (PLP). Catalyzes the phosphorylation of pyridoxal to PLP. This Shigella flexneri protein is Pyridoxal kinase PdxY.